The sequence spans 355 residues: MKKILIMAGGTGGHVFPGLALAEALADKQVKTVWLGTCNGMEKQWVDAAKIPFYTIAISGLRGNGLLGWLKAPFNVFKAWRQARYIIQQEAPDLVLGMGGFVCGPGGLAALSLNKPLVLHEQNATPGLTNKLLAPFAKKVICAFPQSTIKGKQVTVIGNPVRSGLESLPVVKAHSPRHLLVLGGSRGALALNEMVPEALSLLPEEQRPQVIHQTGQKTLQQAMSSYEAANVAADVVPFIDDMVSAYQQADLVVCRSGALTVSELMAAARPAILVPFPYAVDDHQTANAQALVDLNGGEVLQQADMTSELLAERLQFWMADKRCETASRSIRESAPHSAKEKIVDELLTLCDSSVH.

UDP-N-acetyl-alpha-D-glucosamine-binding positions include 11-13 (TGG), Asn123, Arg162, Ser185, Ile239, 258-263 (ALTVSE), and Gln284.

It belongs to the glycosyltransferase 28 family. MurG subfamily.

It localises to the cell inner membrane. It catalyses the reaction di-trans,octa-cis-undecaprenyl diphospho-N-acetyl-alpha-D-muramoyl-L-alanyl-D-glutamyl-meso-2,6-diaminopimeloyl-D-alanyl-D-alanine + UDP-N-acetyl-alpha-D-glucosamine = di-trans,octa-cis-undecaprenyl diphospho-[N-acetyl-alpha-D-glucosaminyl-(1-&gt;4)]-N-acetyl-alpha-D-muramoyl-L-alanyl-D-glutamyl-meso-2,6-diaminopimeloyl-D-alanyl-D-alanine + UDP + H(+). The protein operates within cell wall biogenesis; peptidoglycan biosynthesis. Cell wall formation. Catalyzes the transfer of a GlcNAc subunit on undecaprenyl-pyrophosphoryl-MurNAc-pentapeptide (lipid intermediate I) to form undecaprenyl-pyrophosphoryl-MurNAc-(pentapeptide)GlcNAc (lipid intermediate II). The protein is UDP-N-acetylglucosamine--N-acetylmuramyl-(pentapeptide) pyrophosphoryl-undecaprenol N-acetylglucosamine transferase of Hydrogenovibrio crunogenus (strain DSM 25203 / XCL-2) (Thiomicrospira crunogena).